The sequence spans 222 residues: Orotidine 5'-phosphate decarboxylase (222 aa).

Substrate-binding positions include aspartate 11, lysine 30, 59–68 (DFKLADIGYI), serine 115, 164–174 (PGMGSQGGSYG), glycine 187, and arginine 188. The Proton donor role is filled by lysine 61.

The protein belongs to the OMP decarboxylase family. Type 1 subfamily. Homodimer.

It carries out the reaction orotidine 5'-phosphate + H(+) = UMP + CO2. The protein operates within pyrimidine metabolism; UMP biosynthesis via de novo pathway; UMP from orotate: step 2/2. Functionally, catalyzes the decarboxylation of orotidine 5'-monophosphate (OMP) to uridine 5'-monophosphate (UMP). The protein is Orotidine 5'-phosphate decarboxylase of Saccharolobus solfataricus (strain ATCC 35092 / DSM 1617 / JCM 11322 / P2) (Sulfolobus solfataricus).